The following is a 277-amino-acid chain: Large ribosomal subunit protein uL2c (277 aa).

Disordered stretches follow at residues I24–G57 and N226–S266.

The protein belongs to the universal ribosomal protein uL2 family. As to quaternary structure, part of the 50S ribosomal subunit.

The protein resides in the plastid. Its subcellular location is the chloroplast. This chain is Large ribosomal subunit protein uL2c (rpl2), found in Zygnema circumcarinatum (Green alga).